The following is a 142-amino-acid chain: Maximins y/Hv type 1 (142 aa).

The signal sequence occupies residues 1-18 (MNFKYIVAVSFLIASGYA). The propeptide occupies 19 to 43 (RSEENDVQSLSQREVLEEESLREIR). F68 carries the post-translational modification Phenylalanine amide. Residues 72-121 (TAEDHEVMKRLEAVMRDLDSLDHPEEASERETRGFNQEEIANLFTKKEKR) constitute a propeptide that is removed on maturation. I141 carries the isoleucine amide modification.

Belongs to the bombinin family. As to expression, expressed by the skin glands.

It is found in the secreted. Functionally, maximin-y shows antimicrobial activity against bacteria and against the fungus C.albicans. It has little hemolytic activity. In terms of biological role, maximin-Hv shows antimicrobial activity against bacteria and against the fungus C.albicans. Shows strong hemolytic activity. This Bombina maxima (Giant fire-bellied toad) protein is Maximins y/Hv type 1.